Consider the following 648-residue polypeptide: Biosynthetic arginine decarboxylase (648 aa).

K109 is modified (N6-(pyridoxal phosphate)lysine). Residue 291 to 301 participates in substrate binding; it reads LDVGGGLGVDY.

This sequence belongs to the Orn/Lys/Arg decarboxylase class-II family. SpeA subfamily. The cofactor is Mg(2+). It depends on pyridoxal 5'-phosphate as a cofactor.

The catalysed reaction is L-arginine + H(+) = agmatine + CO2. Catalyzes the biosynthesis of agmatine from arginine. In Prochlorococcus marinus (strain SARG / CCMP1375 / SS120), this protein is Biosynthetic arginine decarboxylase.